The sequence spans 395 residues: Nucleoside diphosphate kinase homolog 7 (395 aa).

Residues 22 to 110 (QSERFAFIAE…YTARQLGSRK (89 aa)) form the DM10 domain.

Belongs to the NDK family. As to quaternary structure, component of sperm flagellar doublet microtubules. Component of the gamma-tubulin ring complex. Widely expressed. Expressed in the flagellum of epididymal sperm but not in testicular sperm (at protein level).

The protein localises to the cytoplasm. The protein resides in the cytoskeleton. It localises to the microtubule organizing center. Its subcellular location is the centrosome. It is found in the nucleus. The protein localises to the spindle. The protein resides in the cilium axoneme. It localises to the flagellum axoneme. Its subcellular location is the cell projection. It is found in the cilium. Possesses an intrinsic kinase activity. Displays 3'-5' exonuclease activity with a preference for single-stranded DNA. Does not seem to have nucleoside diphosphate kinase activity. Functional component of the gamma-tubulin ring complex, implicated in the regulation of the microtubule-nucleating activity of the gamma-tubulin ring complex in centrosomes, in a kinase activity-dependent manner. Part of the dynein-decorated doublet microtubules (DMTs) in cilia axoneme, which is required for motile cilia beating. This Rattus norvegicus (Rat) protein is Nucleoside diphosphate kinase homolog 7 (Nme7).